Consider the following 633-residue polypeptide: Shootin-1 (633 aa).

M1 carries the post-translational modification N-acetylmethionine. Phosphoserine is present on residues S3 and S4. The stretch at 7–353 (EKQLQLITSL…RVNQSENSVP (347 aa)) forms a coiled coil. 2 positions are modified to phosphoserine; by PAK1: S101 and S249. Residues 343–508 (KRVNQSENSV…LATSESKSMP (166 aa)) form a disordered region. Pro residues predominate over residues 352-369 (VPPPPPPPPPLPPPPPNP). At S375 the chain carries Phosphoserine. The segment covering 403–418 (TDLKRQAVEEMMDRIK) has biased composition (basic and acidic residues). The segment covering 456-465 (LNKSTSSRSL) has biased composition (polar residues). At S473 the chain carries Phosphoserine. At T487 the chain carries Phosphothreonine. The segment covering 490 to 505 (ADSSSPTGILATSESK) has biased composition (polar residues). The residue at position 494 (S494) is a Phosphoserine. T496 is subject to Phosphothreonine. Phosphoserine is present on residues S506 and S515. The tract at residues 525-633 (TLEAEFNNPC…KTGETDSSNC (109 aa)) is disordered. T537 is subject to Phosphothreonine. Residues 550–559 (CTNSKVTFQP) are compositionally biased toward polar residues. Positions 590-621 (PQTKDQAAEKDPTQCKEEERGETQPEFKEDSS) are enriched in basic and acidic residues.

It belongs to the shootin family. In terms of assembly, interacts with PFN2. Interacts (via N-terminus) with KIF20B; this interaction is direct and promotes the association of SHTN1 to microtubules in primary neurons. Associates with microtubule. Interacts with L1CAM; this interaction occurs in axonal growth cones. Interacts with actin filament retrograde flow; this interaction is enhanced in a netrin-1- and PAK1-dependent manner and promotes F-actin-substrate coupling and concomitant formation of traction forces at axonal growth cones. Interacts with RUFY3. Phosphorylated on Ser-101 and Ser-249 by PAK1 through a CDC42- and RAC1-dependent signaling pathway, which enhances its association with F-actin retrograde flow in filopodia and lamellipodia of axonal growth cones. Phosphorylation on Ser-101 and Ser-249 is increased by netrin-1. Brain-specific (at protein level). Expressed in hippocampal neurons.

It is found in the perikaryon. The protein localises to the cell projection. It localises to the axon. The protein resides in the growth cone. Its subcellular location is the cytoplasm. It is found in the cytoskeleton. The protein localises to the filopodium. It localises to the lamellipodium. Its function is as follows. Involved in the generation of internal asymmetric signals required for neuronal polarization and neurite outgrowth. Mediates netrin-1-induced F-actin-substrate coupling or 'clutch engagement' within the axon growth cone through activation of CDC42, RAC1 and PAK1-dependent signaling pathway, thereby converting the F-actin retrograde flow into traction forces, concomitantly with filopodium extension and axon outgrowth. Plays a role in cytoskeletal organization by regulating the subcellular localization of phosphoinositide 3-kinase (PI3K) activity at the axonal growth cone. Also plays a role in regenerative neurite outgrowth. In the developing cortex, cooperates with KIF20B to promote both the transition from the multipolar to the bipolar stage and the radial migration of cortical neurons from the ventricular zone toward the superficial layer of the neocortex. Involved in the accumulation of phosphatidylinositol 3,4,5-trisphosphate (PIP3) in the growth cone of primary hippocampal neurons. The chain is Shootin-1 from Rattus norvegicus (Rat).